Reading from the N-terminus, the 366-residue chain is Methyltransferase calH (366 aa).

S-adenosyl-L-methionine is bound by residues Thr189, Asp216, and 245–246 (NA).

This sequence belongs to the class I-like SAM-binding methyltransferase superfamily.

The protein operates within secondary metabolite biosynthesis. Its function is as follows. Methyltransferase; part of the gene cluster that mediates the biosynthesis of calbistrin A and related compounds. Calbistrin A is a secondary metabolite with an interesting structure that was recently found to have bioactivity against leukemia cells. It consists of two polyketides linked by an ester bond: a bicyclic decalin containing polyketide and a linear 12 carbon dioic acid structure. The polyketide synthase calA is probably responsible for forming the decalin moiety. Because calA lacks a designated enoylreductase (ER) domain, the required activity is provided by the trans-enoyl reductase calK. Following release from the PKS, calF then probably catalyzes the oxidation and the subsequent Diels Alder cycloisomerization that lead to the formation of the decalin moiety. The decalin polyketide backbone includes two C-methyl groups, at C7 and C11 in backbone, of which the C7 position is probably methylated by the methyltransferase domain of calA. A candidate for adding the methyl group at C11, if not done by CalA, is the cluster methyltransferase calH. Several additional tailoring enzymes within the cluster could be involved in the modification of the decalin polyketide product. Those include the 3 cytochrome P450 monooxygenases CalE, CalG and CalL, of which one might be responsible for the introduction of the extra hydroxyl group attached to the backbone of the decalin moiety, at position C9 in the backbone, that allows for attachment of the linear moiety. One tailoring enzyme activity that is expected to be involved in biosynthesis of calbistrin is an acyltransferase for connecting the two polyketide synthase products, and which could be performed by the cluster acyltransferase calJ. The enzyme responsible for the biosynthesis of the linear moiety, probably a second PKS, has not been identified yet. In Penicillium decumbens, this protein is Methyltransferase calH.